Consider the following 352-residue polypeptide: Protein RecA (352 aa).

65–72 contacts ATP; that stretch reads GPESSGKT. The segment at 332 to 352 is disordered; that stretch reads EEVEKADVKKDAKKDAAEALK. The segment covering 333–352 has biased composition (basic and acidic residues); it reads EVEKADVKKDAKKDAAEALK.

Belongs to the RecA family.

It localises to the cytoplasm. In terms of biological role, can catalyze the hydrolysis of ATP in the presence of single-stranded DNA, the ATP-dependent uptake of single-stranded DNA by duplex DNA, and the ATP-dependent hybridization of homologous single-stranded DNAs. It interacts with LexA causing its activation and leading to its autocatalytic cleavage. The protein is Protein RecA of Photobacterium profundum (strain SS9).